Here is a 356-residue protein sequence, read N- to C-terminus: tRNA (guanine(26)-N(2))-dimethyltransferase (356 aa).

The 348-residue stretch at 5-352 (VLRREGTVEF…VSAGEVERVL (348 aa)) folds into the Trm1 methyltransferase domain. Residues arginine 40, arginine 67, aspartate 85, aspartate 111, and alanine 112 each contribute to the S-adenosyl-L-methionine site.

The protein belongs to the class I-like SAM-binding methyltransferase superfamily. Trm1 family.

It carries out the reaction guanosine(26) in tRNA + 2 S-adenosyl-L-methionine = N(2)-dimethylguanosine(26) in tRNA + 2 S-adenosyl-L-homocysteine + 2 H(+). Dimethylates a single guanine residue at position 26 of a number of tRNAs using S-adenosyl-L-methionine as donor of the methyl groups. The polypeptide is tRNA (guanine(26)-N(2))-dimethyltransferase (Pyrobaculum arsenaticum (strain DSM 13514 / JCM 11321 / PZ6)).